Reading from the N-terminus, the 173-residue chain is Adenine phosphoribosyltransferase (173 aa).

The protein belongs to the purine/pyrimidine phosphoribosyltransferase family. Homodimer.

The protein localises to the cytoplasm. The catalysed reaction is AMP + diphosphate = 5-phospho-alpha-D-ribose 1-diphosphate + adenine. Its pathway is purine metabolism; AMP biosynthesis via salvage pathway; AMP from adenine: step 1/1. Its function is as follows. Catalyzes a salvage reaction resulting in the formation of AMP, that is energically less costly than de novo synthesis. In Chloroflexus aurantiacus (strain ATCC 29366 / DSM 635 / J-10-fl), this protein is Adenine phosphoribosyltransferase.